The sequence spans 164 residues: 3-isopropylmalate dehydratase small subunit 1 (164 aa).

This sequence belongs to the LeuD family. LeuD type 2 subfamily. As to quaternary structure, heterodimer of LeuC and LeuD.

The enzyme catalyses (2R,3S)-3-isopropylmalate = (2S)-2-isopropylmalate. Its pathway is amino-acid biosynthesis; L-leucine biosynthesis; L-leucine from 3-methyl-2-oxobutanoate: step 2/4. Functionally, catalyzes the isomerization between 2-isopropylmalate and 3-isopropylmalate, via the formation of 2-isopropylmaleate. The sequence is that of 3-isopropylmalate dehydratase small subunit 1 (leuD1) from Pyrococcus furiosus (strain ATCC 43587 / DSM 3638 / JCM 8422 / Vc1).